A 268-amino-acid chain; its full sequence is MNAHVPPESVSAAEDSWTVAGRTFRSRLIVGTGKYKDYATNAAAAKAAGAEIVTVAVRRVNLTDPTQPLLIDYVKPTEFTYLPNTAGCFTGEDAVRTLRLAREAGGWDLVKLEVLSDPKTLYPDMEETLRSLKLLVSEGFQVMVYCSDDPVYARKLEEAGAVAIMPLGAPIGSGLGIQNRVNLRIIVENAGVPVLVDAGVGTASDAAIGMELGCDAILMNTAIAEAKDPIRMARAMKHAVIAGREAYLAGRMQKRLYADPSSPLGGLI.

The active-site Schiff-base intermediate with DXP is the Lys-111. Residues Gly-172, 198 to 199 (AG), and 220 to 221 (NT) each bind 1-deoxy-D-xylulose 5-phosphate.

The protein belongs to the ThiG family. Homotetramer. Forms heterodimers with either ThiH or ThiS.

It localises to the cytoplasm. The catalysed reaction is [ThiS sulfur-carrier protein]-C-terminal-Gly-aminoethanethioate + 2-iminoacetate + 1-deoxy-D-xylulose 5-phosphate = [ThiS sulfur-carrier protein]-C-terminal Gly-Gly + 2-[(2R,5Z)-2-carboxy-4-methylthiazol-5(2H)-ylidene]ethyl phosphate + 2 H2O + H(+). It functions in the pathway cofactor biosynthesis; thiamine diphosphate biosynthesis. Functionally, catalyzes the rearrangement of 1-deoxy-D-xylulose 5-phosphate (DXP) to produce the thiazole phosphate moiety of thiamine. Sulfur is provided by the thiocarboxylate moiety of the carrier protein ThiS. In vitro, sulfur can be provided by H(2)S. The chain is Thiazole synthase from Caulobacter sp. (strain K31).